We begin with the raw amino-acid sequence, 366 residues long: MISSYHRPTRALIDLEAIANNVKSVQEHIPSDKKTFAVVKANAYGHGAVEVSKYIESIVDGFCVSNLDEAIELRQAGIVKMILVLGVVMPEQVILAKNENITLTVASLEWLRLCQTSAVDLSGLEVHIKVDSGMGRIGVRQLDEGNKLISELGESGASVKGIFTHFATADEADNCKFNQQLTFFKDFISGLDNCPDLVHASNSATSLWHSETIFNAVRLGVVMYGLNPSGTDLDLPYPINPALSLESELVHVKQLHDGSQVGYGATYQVTGDEFVGTVPIGYADGWTRDMQGFSVIVNGELCEIIGRVSMDQMTIRLPQKYTIGTKVTLIGQQGSCNITTTDVAQKRQTINYEVLCLLSDRIPRYY.

The Proton acceptor; specific for D-alanine role is filled by Lys40. Lys40 is subject to N6-(pyridoxal phosphate)lysine. Position 136 (Arg136) interacts with substrate. Tyr263 functions as the Proton acceptor; specific for L-alanine in the catalytic mechanism. Met310 is a binding site for substrate.

This sequence belongs to the alanine racemase family. Pyridoxal 5'-phosphate serves as cofactor.

The catalysed reaction is L-alanine = D-alanine. It participates in amino-acid biosynthesis; D-alanine biosynthesis; D-alanine from L-alanine: step 1/1. Its function is as follows. Catalyzes the interconversion of L-alanine and D-alanine. May also act on other amino acids. The polypeptide is Alanine racemase (alr) (Streptococcus agalactiae serotype Ia (strain ATCC 27591 / A909 / CDC SS700)).